We begin with the raw amino-acid sequence, 201 residues long: uncharacterized protein (201 aa).

A helical membrane pass occupies residues 11–31 (IWKSLYLLIIVGMLYIGYILI).

The protein localises to the membrane. This is an uncharacterized protein from Rickettsia prowazekii (strain Madrid E).